A 244-amino-acid chain; its full sequence is Large ribosomal subunit protein uL30 (244 aa).

Belongs to the universal ribosomal protein uL30 family.

In Candida glabrata (strain ATCC 2001 / BCRC 20586 / JCM 3761 / NBRC 0622 / NRRL Y-65 / CBS 138) (Yeast), this protein is Large ribosomal subunit protein uL30 (RPL7).